The chain runs to 437 residues: Aspartokinase (437 aa).

This sequence belongs to the aspartokinase family.

It carries out the reaction L-aspartate + ATP = 4-phospho-L-aspartate + ADP. It functions in the pathway amino-acid biosynthesis; L-lysine biosynthesis via DAP pathway; (S)-tetrahydrodipicolinate from L-aspartate: step 1/4. The protein operates within amino-acid biosynthesis; L-methionine biosynthesis via de novo pathway; L-homoserine from L-aspartate: step 1/3. It participates in amino-acid biosynthesis; L-threonine biosynthesis; L-threonine from L-aspartate: step 1/5. The protein is Aspartokinase (lysC) of Chlamydia muridarum (strain MoPn / Nigg).